Here is a 317-residue protein sequence, read N- to C-terminus: E3 ubiquitin-protein ligase NRDP1 (317 aa).

The RING-type; degenerate zinc finger occupies 18–57; that stretch reads CPICSGVLEEPVQAPHCEHAFCNACITQWFSQQQTCPVDR. The SIAH-type; degenerate zinc-finger motif lies at 78–138; it reads KLQIACDNAV…LPNHNCIKHL (61 aa).

Interacts with USP8, ERBB3, PRKN and BIRC6. Interacts with CSF2RB, EPOR, IL3RA, MYD88 and TBK1. Interacts with Clec16a. In terms of processing, autoubiquitinated. Autoubiquitination leads to proteasomal degradation. Deubiquitinated by USP8 to get stabilized which induces apoptosis.

The catalysed reaction is S-ubiquitinyl-[E2 ubiquitin-conjugating enzyme]-L-cysteine + [acceptor protein]-L-lysine = [E2 ubiquitin-conjugating enzyme]-L-cysteine + N(6)-ubiquitinyl-[acceptor protein]-L-lysine.. The protein operates within protein modification; protein ubiquitination. In terms of biological role, acts as E3 ubiquitin-protein ligase and regulates the degradation of target proteins. Polyubiquitinates MYD88. Negatively regulates MYD88-dependent production of pro-inflammatory cytokines. Can promote TRIF-dependent production of type I interferon and inhibits infection with vesicular stomatitis virus. Also promotes activation of TBK1 and IRF3. Involved in the ubiquitination of erythropoietin (EPO) and interleukin-3 (IL-3) receptors. Thus, through maintaining basal levels of cytokine receptors, RNF41 is involved in the control of hematopoietic progenitor cell differentiation into myeloerythroid lineages. Contributes to the maintenance of steady-state ERBB3 levels by mediating its growth factor-independent degradation. Involved in the degradation of the inhibitor of apoptosis BIRC6 and thus is an important regulator of cell death by promoting apoptosis. Also acts as a PRKN modifier that accelerates its degradation, resulting in a reduction of PRKN activity, influencing the balance of intracellular redox state. The RNF41-PRKN pathway regulates autophagosome-lysosome fusion during late mitophagy. Mitophagy is a selective form of autophagy necessary for mitochondrial quality control. This is E3 ubiquitin-protein ligase NRDP1 (Rnf41) from Mus musculus (Mouse).